A 256-amino-acid chain; its full sequence is MDRLDFSIKLLRKVGHLLMIHWGRVDNVEKKTGFKDIVTEIDREAQRMIVDEIRKFFPDENIMAEEGIFEKGDRLWIIDPIDGTINFVHGLPNFSISLAYVENGEVKLGVVHAPALNETLYAEEGSGAFFNGERIRVSENASLEECVGSTGSYVDFTGKFIERMEKRTRRIRILGSAALNAAYVGAGRVDFFVTWRINPWDIAAGLIIVKEAGGMVTDFSGKEANAFSKNFIFSNGLIHDEVVKVVNEVVEEIGGK.

The Mg(2+) site is built by E65, D79, I81, and D82. Substrate contacts are provided by residues 82 to 84, R172, A177, and R196; that span reads DGT. Residue D201 participates in Mg(2+) binding.

It belongs to the inositol monophosphatase superfamily. FBPase class 4 family. In terms of assembly, homotetramer. It depends on Mg(2+) as a cofactor.

It catalyses the reaction beta-D-fructose 1,6-bisphosphate + H2O = beta-D-fructose 6-phosphate + phosphate. It carries out the reaction a myo-inositol phosphate + H2O = myo-inositol + phosphate. Its activity is regulated as follows. In contrast to mammalian I-1-P phosphatases, is only weakly inhibited by Li(+), since 50% inhibitory concentration for Li(+) is about 100 mM, and the Li(+) concentration required to totally abolish I-1-Pase activity is 1 M. Its function is as follows. Phosphatase with broad specificity; it can dephosphorylate fructose 1,6-bisphosphate, both D and L isomers of inositol-1-phosphate (I-1-P) but displaying a 20-fold higher rate of hydrolysis of D-I-1-P than of the L isomer, 2'-AMP, pNPP, inositol-2-phosphate, beta-glycerol phosphate, and alpha-D-glucose-1-phosphate. Cannot hydrolyze glucose-6-phosphate, fructose-6-phosphate, 5'-AMP and NAD(+). May be involved in the biosynthesis of a unique osmolyte, di-myo-inositol 1,1-phosphate. This is Fructose-1,6-bisphosphatase/inositol-1-monophosphatase (suhB) from Thermotoga maritima (strain ATCC 43589 / DSM 3109 / JCM 10099 / NBRC 100826 / MSB8).